Here is a 205-residue protein sequence, read N- to C-terminus: Dephospho-CoA kinase (205 aa).

The DPCK domain occupies 4–203 (KIGITGGIGS…QKIHYLCSAK (200 aa)). ATP is bound at residue 12–17 (GSGKSV).

This sequence belongs to the CoaE family.

The protein localises to the cytoplasm. It carries out the reaction 3'-dephospho-CoA + ATP = ADP + CoA + H(+). Its pathway is cofactor biosynthesis; coenzyme A biosynthesis; CoA from (R)-pantothenate: step 5/5. Functionally, catalyzes the phosphorylation of the 3'-hydroxyl group of dephosphocoenzyme A to form coenzyme A. In Bacteroides fragilis (strain ATCC 25285 / DSM 2151 / CCUG 4856 / JCM 11019 / LMG 10263 / NCTC 9343 / Onslow / VPI 2553 / EN-2), this protein is Dephospho-CoA kinase.